The sequence spans 344 residues: 3,4-dihydroxy-2-butanone 4-phosphate synthase (344 aa).

The segment at 1–202 (MILRRVTEAL…VSDLISYRLE (202 aa)) is DHBP synthase. D-ribulose 5-phosphate is bound by residues 27–28 (RE), Asp-32, 139–143 (RTGHT), and Glu-163. Glu-28 provides a ligand contact to Mg(2+). Residue His-142 participates in Mg(2+) binding. Positions 203–344 (NESLLKMFCQ…GLKLVETISL (142 aa)) are GTP cyclohydrolase II-like.

The protein in the N-terminal section; belongs to the DHBP synthase family. In the C-terminal section; belongs to the GTP cyclohydrolase II family. Requires Mg(2+) as cofactor. The cofactor is Mn(2+).

The catalysed reaction is D-ribulose 5-phosphate = (2S)-2-hydroxy-3-oxobutyl phosphate + formate + H(+). The protein operates within cofactor biosynthesis; riboflavin biosynthesis; 2-hydroxy-3-oxobutyl phosphate from D-ribulose 5-phosphate: step 1/1. Functionally, catalyzes the conversion of D-ribulose 5-phosphate to formate and 3,4-dihydroxy-2-butanone 4-phosphate. The chain is 3,4-dihydroxy-2-butanone 4-phosphate synthase (ribB) from Helicobacter pylori (strain J99 / ATCC 700824) (Campylobacter pylori J99).